Consider the following 319-residue polypeptide: GATA transcription factor 18 (319 aa).

A compositionally biased stretch (low complexity) spans 1–15 (MPDAAAAAAAAQDAD). The interval 1-74 (MPDAAAAAAA…AAPEPVSALL (74 aa)) is disordered. Residues 31–60 (DNDDDDGDDGTEEDEEEDDDEEGDEEELPP) are compositionally biased toward acidic residues. One can recognise a Tify domain in the interval 74–109 (LPGSPNQLTLLFQGEVYVFESVTPEKVQAVLLLLGR). The region spanning 143–185 (RVASLIRFREKRKERNFDKKIRYAVRKEVALRMQRRKGQFAGR) is the CCT domain. The GATA-type zinc finger occupies 215–242 (CQNCGTSEKMTPAMRRGPAGPRTLCNAC). Residues 292–319 (ITASHGEVMGDSTPANEAEIGAPKAQSQ) are disordered.

It belongs to the type IV zinc-finger family. Class C subfamily.

It localises to the nucleus. Transcriptional activator that specifically binds 5'-GATA-3' or 5'-GAT-3' motifs within gene promoters. This Oryza sativa subsp. japonica (Rice) protein is GATA transcription factor 18.